Consider the following 538-residue polypeptide: Syncytin-2 (538 aa).

Residues 1 to 15 (MGLLLLVLILTPLLA) form the signal peptide. Residues 16–478 (AHRHPDFPLL…GWLNWEGTWK (463 aa)) are Extracellular-facing. The CXXC signature appears at 43 to 46 (CWLC). Cystine bridges form between cysteine 43-cysteine 46, cysteine 43-cysteine 439, and cysteine 431-cysteine 438. 8 N-linked (GlcNAc...) asparagine glycosylation sites follow: asparagine 133, asparagine 146, asparagine 177, asparagine 220, asparagine 241, asparagine 247, asparagine 312, and asparagine 332. Residues 354–374 (FIPLLAGLGIIAGTGTGIAGI) are fusion peptide. Positions 414 to 430 (LQNRRGLDMLTAAQGGI) match the CKS-17 motif. Positions 431–439 (CLALDEKCC) match the CX6CC motif. Asparagine 443 carries an N-linked (GlcNAc...) asparagine glycan. A helical transmembrane segment spans residues 479 to 499 (WFSWVLPFTGPLVSLLLLLLF). Residues 500–538 (GPCLLNLITQFVLSRLQAIKLQTNLSAGCRPHNIQESPF) are Cytoplasmic-facing.

It belongs to the gamma type-C retroviral envelope protein family. HERV class-I FRD env subfamily. In terms of assembly, the surface and transmembrane proteins form a heterodimer. They are attached by non-covalent interactions or by a labile interchain disulfide bond. Specific enzymatic cleavages in vivo yield the mature SU and TM proteins. In terms of processing, the CXXC motif is highly conserved across a broad range of retroviral envelope proteins. It is thought to participate in the formation of a labile disulfide bond possibly with the CX6CC motif present in the transmembrane protein.

The protein localises to the virion. Its subcellular location is the cell membrane. Functionally, this endogenous retroviral envelope protein has retained its original fusogenic properties and participates in trophoblast fusion and the formation of a syncytium during placenta morphogenesis. The interaction with MFSD2A is apparently important for this process. Its function is as follows. Endogenous envelope proteins may have kept, lost or modified their original function during evolution but this one can still make pseudotypes with MLV, HIV-1 or SIV-1 virions and confer infectivity. Retroviral envelope proteins mediate receptor recognition and membrane fusion during early infection. The surface protein mediates receptor recognition, while the transmembrane protein anchors the envelope heterodimer to the viral membrane through one transmembrane domain. The other hydrophobic domain, called fusion peptide, mediates fusion of the viral membrane with the target cell membrane. This Pongo pygmaeus (Bornean orangutan) protein is Syncytin-2 (ERVFRD-1).